Consider the following 147-residue polypeptide: Receptor activity-modifying protein 3 (147 aa).

The first 22 residues, 1-22 (MATPAQRLHLLPLLLLLCGECA), serve as a signal peptide directing secretion. Residues 23–112 (QVCGCNETGM…CTVDRTHWED (90 aa)) lie on the Extracellular side of the membrane. N-linked (GlcNAc...) asparagine glycosylation is found at N28, N57, N70, and N102. Disulfide bonds link C39-C71 and C56-C103. A helical membrane pass occupies residues 113 to 137 (PPDEVLIPLIAVPVLLTVAMAGLVV). The Cytoplasmic portion of the chain corresponds to 138 to 147 (WRSKRTDRLL).

Belongs to the RAMP family. Heterodimer of CALCRL and RAMP3; interaction induces allosteric modulation of CALCRL function and ligand specificity for adrenomedullin/ADM and intermedin/ADM2. Heterodimer of CALCR and RAMP3; interaction form the receptor complex AMYR3 for amylin/IAPP. Interacts with GPER1.

It is found in the cell membrane. Its subcellular location is the membrane. Accessory protein that interacts with and modulates the function of G-protein coupled receptors including calcitonin gene-related peptide type 1 receptor (CALCRL), calcitonin receptor (CALCR) and G-protein coupled estrogen receptor 1 (GPER1). Required for the transport of CALCRL and GPER1 receptors to the plasma membrane. Plays a role in cardioprotection by reducing cardiac hypertrophy and perivascular fibrosis in a GPER1-dependent manner. Together with CALCRL, form a receptor complex for adrenomedullin/ADM and intermedin/ADM2. Together with CALCR, act as a receptor complex for amylin/IAPP. The protein is Receptor activity-modifying protein 3 of Rattus norvegicus (Rat).